Reading from the N-terminus, the 429-residue chain is Adenylosuccinate synthetase (429 aa).

Residues 12–18 (GDEGKGK) and 40–42 (GHT) each bind GTP. Catalysis depends on Asp-13, which acts as the Proton acceptor. Positions 13 and 40 each coordinate Mg(2+). Residues 13 to 16 (DEGK), 38 to 41 (NAGH), Thr-129, Arg-143, Gln-224, Thr-239, and Arg-303 contribute to the IMP site. His-41 (proton donor) is an active-site residue. 299-305 (ATTGRKR) lines the substrate pocket. Residues Arg-305, 331–333 (KLD), and 413–415 (SVG) contribute to the GTP site.

It belongs to the adenylosuccinate synthetase family. In terms of assembly, homodimer. It depends on Mg(2+) as a cofactor.

The protein resides in the cytoplasm. It catalyses the reaction IMP + L-aspartate + GTP = N(6)-(1,2-dicarboxyethyl)-AMP + GDP + phosphate + 2 H(+). It participates in purine metabolism; AMP biosynthesis via de novo pathway; AMP from IMP: step 1/2. In terms of biological role, plays an important role in the de novo pathway of purine nucleotide biosynthesis. Catalyzes the first committed step in the biosynthesis of AMP from IMP. The sequence is that of Adenylosuccinate synthetase from Desulfosudis oleivorans (strain DSM 6200 / JCM 39069 / Hxd3) (Desulfococcus oleovorans).